Consider the following 96-residue polypeptide: UPF0251 protein Spea_3639 (96 aa).

It belongs to the UPF0251 family.

This Shewanella pealeana (strain ATCC 700345 / ANG-SQ1) protein is UPF0251 protein Spea_3639.